Here is a 221-residue protein sequence, read N- to C-terminus: High frequency lysogenization protein HflD homolog (221 aa).

Belongs to the HflD family.

The protein localises to the cytoplasm. The protein resides in the cell inner membrane. The chain is High frequency lysogenization protein HflD homolog from Acidithiobacillus ferrooxidans (strain ATCC 23270 / DSM 14882 / CIP 104768 / NCIMB 8455) (Ferrobacillus ferrooxidans (strain ATCC 23270)).